We begin with the raw amino-acid sequence, 637 residues long: 1,4-alpha-glucan branching enzyme GlgB (637 aa).

D307 (nucleophile) is an active-site residue. The active-site Proton donor is the E361.

It belongs to the glycosyl hydrolase 13 family. GlgB subfamily. As to quaternary structure, monomer.

The catalysed reaction is Transfers a segment of a (1-&gt;4)-alpha-D-glucan chain to a primary hydroxy group in a similar glucan chain.. The protein operates within glycan biosynthesis; glycogen biosynthesis. Its function is as follows. Catalyzes the formation of the alpha-1,6-glucosidic linkages in glycogen by scission of a 1,4-alpha-linked oligosaccharide from growing alpha-1,4-glucan chains and the subsequent attachment of the oligosaccharide to the alpha-1,6 position. This Oceanobacillus iheyensis (strain DSM 14371 / CIP 107618 / JCM 11309 / KCTC 3954 / HTE831) protein is 1,4-alpha-glucan branching enzyme GlgB.